The sequence spans 390 residues: Queuine tRNA-ribosyltransferase (390 aa).

D90 serves as the catalytic Proton acceptor. Substrate contacts are provided by residues 90-94, D144, Q197, and G224; that span reads DSGGF. Positions 255 to 261 are RNA binding; the sequence is GVGTPED. Catalysis depends on D274, which acts as the Nucleophile. Residues 279–283 form an RNA binding; important for wobble base 34 recognition region; the sequence is TRNAR. Zn(2+)-binding residues include C312, C314, C317, and H354.

The protein belongs to the queuine tRNA-ribosyltransferase family. Homodimer. Within each dimer, one monomer is responsible for RNA recognition and catalysis, while the other monomer binds to the replacement base PreQ1. The cofactor is Zn(2+).

It catalyses the reaction 7-aminomethyl-7-carbaguanine + guanosine(34) in tRNA = 7-aminomethyl-7-carbaguanosine(34) in tRNA + guanine. It functions in the pathway tRNA modification; tRNA-queuosine biosynthesis. Functionally, catalyzes the base-exchange of a guanine (G) residue with the queuine precursor 7-aminomethyl-7-deazaguanine (PreQ1) at position 34 (anticodon wobble position) in tRNAs with GU(N) anticodons (tRNA-Asp, -Asn, -His and -Tyr). Catalysis occurs through a double-displacement mechanism. The nucleophile active site attacks the C1' of nucleotide 34 to detach the guanine base from the RNA, forming a covalent enzyme-RNA intermediate. The proton acceptor active site deprotonates the incoming PreQ1, allowing a nucleophilic attack on the C1' of the ribose to form the product. After dissociation, two additional enzymatic reactions on the tRNA convert PreQ1 to queuine (Q), resulting in the hypermodified nucleoside queuosine (7-(((4,5-cis-dihydroxy-2-cyclopenten-1-yl)amino)methyl)-7-deazaguanosine). This is Queuine tRNA-ribosyltransferase from Leptothrix cholodnii (strain ATCC 51168 / LMG 8142 / SP-6) (Leptothrix discophora (strain SP-6)).